The primary structure comprises 269 residues: Probable membrane transporter protein YfcA (269 aa).

Residues 1–7 (METFNSL) are Periplasmic-facing. A helical transmembrane segment spans residues 8–28 (FMVSPLLLGVLFFVAMLAGFI). Over 29 to 30 (DS) the chain is Cytoplasmic. Residues 31-51 (IAGGGGLLTIPALMAAGMSPA) traverse the membrane as a helical segment. Over 52–84 (NALATNKLQACGGSISATIYFIRRKVVSLSDQK) the chain is Periplasmic. Residues 85-105 (LNIAMTFVGSMSGALLVQYVQ) form a helical membrane-spanning segment. Topologically, residues 106-111 (ADVLRQ) are cytoplasmic. The helical transmembrane segment at 112–132 (ILPILVICIGLYFLLMPKLGE) threads the bilayer. Over 133-156 (EDRQRRMYGLPFALIAGGCVGFYD) the chain is Periplasmic. The helical transmembrane segment at 157–177 (GFFGPAAGSFYALAFVTLCGF) threads the bilayer. At 178 to 197 (NLAKATAHAKLLNATSNIGG) the chain is on the cytoplasmic side. The chain crosses the membrane as a helical span at residues 198-218 (LLLFILGGKVIWATGFVMLVG). Residues 219–269 (QFLGARMGSRLVLSKGQKLIRPMIVIVSAVMSAKLLYDSHGQEILHWLGMN) lie on the Periplasmic side of the membrane.

It belongs to the 4-toluene sulfonate uptake permease (TSUP) (TC 2.A.102) family.

Its subcellular location is the cell inner membrane. This chain is Probable membrane transporter protein YfcA (yfcA), found in Escherichia coli O157:H7.